Here is a 407-residue protein sequence, read N- to C-terminus: Ameloblastin (407 aa).

A signal peptide spans 1 to 26 (MSASKIPLFKMKGLILFLSLVKMSLA). Pro42 carries the hydroxyproline modification. A Phosphoserine modification is found at Ser48. Disordered stretches follow at residues 124 to 143 (GVQVTPQKPGPQPPMHPGQL) and 259 to 304 (QNSP…ENPA).

Belongs to the ameloblastin family. In terms of tissue distribution, ameloblast-specific.

It is found in the secreted. Its subcellular location is the extracellular space. The protein localises to the extracellular matrix. Involved in the mineralization and structural organization of enamel. The chain is Ameloblastin (Ambn) from Mus musculus (Mouse).